The following is a 527-amino-acid chain: Peptide chain release factor 3 (527 aa).

The 269-residue stretch at 9-277 (AKRRTFAIIS…AVVDWAPRPL (269 aa)) folds into the tr-type G domain. Residues 18–25 (SHPDAGKT), 86–90 (DTPGH), and 140–143 (NKLD) contribute to the GTP site.

It belongs to the TRAFAC class translation factor GTPase superfamily. Classic translation factor GTPase family. PrfC subfamily.

Its subcellular location is the cytoplasm. In terms of biological role, increases the formation of ribosomal termination complexes and stimulates activities of RF-1 and RF-2. It binds guanine nucleotides and has strong preference for UGA stop codons. It may interact directly with the ribosome. The stimulation of RF-1 and RF-2 is significantly reduced by GTP and GDP, but not by GMP. This Pseudomonas putida (strain W619) protein is Peptide chain release factor 3.